The sequence spans 318 residues: Curved DNA-binding protein (318 aa).

The region spanning 5–69 is the J domain; sequence DYYKILGVEP…QKRAEFDEIR (65 aa). The segment at 111-130 is disordered; sequence GGGNPFGGARQQQRSAGRRG.

It is found in the cytoplasm. Its subcellular location is the nucleoid. Its function is as follows. DNA-binding protein that preferentially recognizes a curved DNA sequence. It is probably a functional analog of DnaJ; displays overlapping activities with DnaJ, but functions under different conditions, probably acting as a molecular chaperone in an adaptive response to environmental stresses other than heat shock. Lacks autonomous chaperone activity; binds native substrates and targets them for recognition by DnaK. Its activity is inhibited by the binding of CbpM. This is Curved DNA-binding protein from Pseudomonas putida (strain GB-1).